A 295-amino-acid polypeptide reads, in one-letter code: Small ribosomal subunit protein uS2 (295 aa).

The disordered stretch occupies residues 273 to 295 (WAASSAPAAETLADPAADPSVKW). Residues 274–295 (AASSAPAAETLADPAADPSVKW) show a composition bias toward low complexity.

Belongs to the universal ribosomal protein uS2 family. In terms of assembly, component of the small ribosomal subunit. Mature ribosomes consist of a small (40S) and a large (60S) subunit. The 40S subunit contains about 33 different proteins and 1 molecule of RNA (18S). The 60S subunit contains about 49 different proteins and 3 molecules of RNA (25S, 5.8S and 5S). Interacts with RPS21.

It is found in the cytoplasm. Required for the assembly and/or stability of the 40S ribosomal subunit. Required for the processing of the 20S rRNA-precursor to mature 18S rRNA in a late step of the maturation of 40S ribosomal subunits. In Paracoccidioides lutzii (strain ATCC MYA-826 / Pb01) (Paracoccidioides brasiliensis), this protein is Small ribosomal subunit protein uS2.